The chain runs to 411 residues: SH3 and cysteine-rich domain-containing protein 2 (411 aa).

The segment at 1-29 is disordered; sequence MTEMSEKENEPDDAATHSPPGTVSALQET. Residues 19 to 29 are compositionally biased toward polar residues; it reads PPGTVSALQET. Serine 48 carries the phosphoserine modification. Residues 64 to 95 are disordered; sequence TEVLLTPPTPLPPPSPPPTASDRGLATPSPSP. The span at 70-82 shows a compositional bias: pro residues; it reads PPTPLPPPSPPPT. The Phorbol-ester/DAG-type zinc finger occupies 110–161; that stretch reads LHSFQEHVFKRASPCELCHQLIVGNSKQGLRCKMCKVSVHLWCSEEISHQQC. Disordered stretches follow at residues 174–203 and 219–288; these read SSPL…KVDP and RSSF…ATLR. Residues 219–232 show a composition bias toward low complexity; that stretch reads RSSFSSTSESPTRS. SH3 domains lie at 292–351 and 354–411; these read GPMY…RVRP and NVWR…LTEI.

In terms of assembly, interacts (via SH3 domains) with CACNA1S. Interacts (via SH3 domains) with CACNA1C. Has much lower affinity for CACNA1C than for CACNA1S.

Its subcellular location is the cytoplasm. It is found in the cytosol. The protein resides in the cell membrane. The protein localises to the sarcolemma. In terms of biological role, plays a redundant role in promoting the expression of calcium channel CACNA1S at the cell membrane, and thereby contributes to increased channel activity. Slows down the inactivation rate of the calcium channel CACNA1C. The sequence is that of SH3 and cysteine-rich domain-containing protein 2 (STAC2) from Homo sapiens (Human).